We begin with the raw amino-acid sequence, 338 residues long: Sporulation protein YdcC (338 aa).

The chain crosses the membrane as a helical span at residues 8 to 25 (FVLLLTGLLAVLILSACG).

The protein localises to the cell membrane. In terms of biological role, required for efficient sporulation. The chain is Sporulation protein YdcC (ydcC) from Bacillus subtilis (strain 168).